The sequence spans 185 residues: Probable RNA polymerase sigma-C factor (185 aa).

A Polymerase core binding motif is present at residues 52–65 (DLTQETFLRAIGAI). The segment at residues 149 to 168 (YADAAAVCGCPVGTIRSRVA) is a DNA-binding region (H-T-H motif).

This sequence belongs to the sigma-70 factor family. ECF subfamily.

Sigma factors are initiation factors that promote the attachment of RNA polymerase to specific initiation sites and are then released. This is Probable RNA polymerase sigma-C factor (sigC) from Mycobacterium bovis (strain ATCC BAA-935 / AF2122/97).